The primary structure comprises 29 residues: NAD(P)H-quinone oxidoreductase subunit 5, chloroplastic (29 aa).

Residues 1–15 traverse the membrane as a helical segment; it reads SGSIIHSMEANVGYS.

Belongs to the complex I subunit 5 family. NDH is composed of at least 16 different subunits, 5 of which are encoded in the nucleus.

The protein localises to the plastid. It is found in the chloroplast thylakoid membrane. It carries out the reaction a plastoquinone + NADH + (n+1) H(+)(in) = a plastoquinol + NAD(+) + n H(+)(out). The enzyme catalyses a plastoquinone + NADPH + (n+1) H(+)(in) = a plastoquinol + NADP(+) + n H(+)(out). NDH shuttles electrons from NAD(P)H:plastoquinone, via FMN and iron-sulfur (Fe-S) centers, to quinones in the photosynthetic chain and possibly in a chloroplast respiratory chain. The immediate electron acceptor for the enzyme in this species is believed to be plastoquinone. Couples the redox reaction to proton translocation, and thus conserves the redox energy in a proton gradient. The sequence is that of NAD(P)H-quinone oxidoreductase subunit 5, chloroplastic from Pseudotsuga menziesii (Douglas-fir).